Reading from the N-terminus, the 248-residue chain is Small ribosomal subunit protein uS2 (248 aa).

This sequence belongs to the universal ribosomal protein uS2 family.

The chain is Small ribosomal subunit protein uS2 from Herminiimonas arsenicoxydans.